The sequence spans 514 residues: Probable endopolygalacturonase D (514 aa).

An N-terminal signal peptide occupies residues 1–16 (MKRCALLTPLLPLALA). The interval 134–166 (IKSSSPGPSSSFAAAATTEAPTSTRASPYTPYT) is disordered. Residues 136–166 (SSSPGPSSSFAAAATTEAPTSTRASPYTPYT) show a composition bias toward low complexity. Cys173 and Cys188 form a disulfide bridge. An N-linked (GlcNAc...) asparagine glycan is attached at Asn240. PbH1 repeat units lie at residues 280-302 (VYNS…DIEN), 303-341 (TESL…DIKS), 342-363 (STDL…AITS), 364-384 (GTNI…SIGS), 393-414 (VDGV…RIKT), 422-444 (VSNI…VVQQ), and 456-500 (SNGV…SITG). A disordered region spans residues 312-335 (TLDNSAGDEPNDSSDGDPAAHNSD). Asn322 carries N-linked (GlcNAc...) asparagine glycosylation. Asp356 acts as the Proton donor in catalysis. A disulfide bridge connects residues Cys358 and Cys374. Asn366 is a glycosylation site (N-linked (GlcNAc...) asparagine). The active site involves His378. Asn429 carries an N-linked (GlcNAc...) asparagine glycan. Cys483 and Cys488 are joined by a disulfide. Asn490 carries N-linked (GlcNAc...) asparagine glycosylation. A disulfide bridge connects residues Cys506 and Cys513.

It belongs to the glycosyl hydrolase 28 family.

It is found in the secreted. The catalysed reaction is (1,4-alpha-D-galacturonosyl)n+m + H2O = (1,4-alpha-D-galacturonosyl)n + (1,4-alpha-D-galacturonosyl)m.. Involved in maceration and soft-rotting of plant tissue. Hydrolyzes the 1,4-alpha glycosidic bonds of de-esterified pectate in the smooth region of the plant cell wall. The polypeptide is Probable endopolygalacturonase D (pgaD) (Emericella nidulans (strain FGSC A4 / ATCC 38163 / CBS 112.46 / NRRL 194 / M139) (Aspergillus nidulans)).